The chain runs to 300 residues: MAADRTAAGTAVRRRQCRGGVRRQRTHVLSSATAGGPHPRNLIGMTVSIPTTPNTRLQGKRCLITAAGAGIGRESALACARAGAHVIATDIDAAALQALAAESDAITTQLLDVTDAAAITALVAAHGPFDVLFNCAGYVHQGSILDCDEPAWRRSFSINVDAMYYTCKAVLPGMLERGRGSIINMSSVASSIKGVPNRFVYGVTKAAVIGLSKAIAADYVAQGVRCNAICPGTIKTPSLGQRVQALGGDEQAVWKSFTDRQPMGRLGDPREIAQLVVYLASDESSFTTGQTHIIDGGWSN.

NAD(+)-binding positions include 63–90 and Asp-112; that span reads LITAAGAGIGRESALACARAGAHVIATD. A substrate-binding site is contributed by Arg-198. Tyr-201 serves as the catalytic Proton acceptor. Residues Lys-205 and 234–238 contribute to the NAD(+) site; that span reads IKTPS. Residues Arg-242 and Arg-260 each contribute to the substrate site.

It belongs to the short-chain dehydrogenases/reductases (SDR) family.

Functionally, plays a role in the catabolism of L-fucose. Catalyzes the NAD(+)-dependent oxidation of 2-keo-3-deoxy-L-fuconate to 2,4-diketo-3-deoxy-L-fuconate. This Xanthomonas campestris pv. campestris (strain ATCC 33913 / DSM 3586 / NCPPB 528 / LMG 568 / P 25) protein is 2-keto-3-deoxy-L-fuconate dehydrogenase.